Consider the following 561-residue polypeptide: Carbohydrate sulfotransferase 15 (561 aa).

Residues 1 to 80 (MRHCINCCIQ…FLRFKKGKRC (80 aa)) are Cytoplasmic-facing. The helical; Signal-anchor for type II membrane protein transmembrane segment at 81–101 (SLVFGLIIMTLVMASYILSGA) threads the bilayer. Residues 102–561 (HQELLISSPF…ADEAFAWKTT (460 aa)) are Lumenal-facing. A 3'-phosphoadenylyl sulfate-binding site is contributed by 263 to 267 (KCGTT). N-linked (GlcNAc...) asparagine glycosylation is present at asparagine 364. 3'-phosphoadenylyl sulfate contacts are provided by arginine 392 and serine 400.

It belongs to the sulfotransferase 1 family. Homodimer; disulfide-linked (Potential). The relevance of homodimerization is however unsure. May interact with phosphorylated proteins in resting B-cells, including HCK. It depends on a divalent metal cation as a cofactor. Requires glutathione as cofactor. In terms of processing, glycosylated. Expressed in B-cell-enriched tissues but not in fetal or adult thymus. Expressed in fetal and adult spleen, lymph node, tonsil, bone marrow and peripheral leukocytes. Not expressed in T-cells. In pro-B, pre-B, and mature B-cell lines, it colocalizes with RAG1.

The protein resides in the golgi apparatus membrane. The enzyme catalyses dermatan 4'-sulfate + n 3'-phosphoadenylyl sulfate = dermatan 4',6'-bissulfate + n adenosine 3',5'-bisphosphate + n H(+). The catalysed reaction is chondroitin 4'-sulfate + n 3'-phosphoadenylyl sulfate = chondroitin 4',6'-bissulfate + n adenosine 3',5'-bisphosphate + n H(+). With respect to regulation, inhibited by phenyl beta-GalNAc(4,6-SO(4)). Functionally, sulfotransferase that transfers sulfate from 3'-phosphoadenosine 5'-phosphosulfate (PAPS) to the C-6 hydroxyl group of the GalNAc 4-sulfate residue of chondroitin sulfate A and forms chondroitin sulfate E containing GlcA-GalNAc(4,6-SO(4)) repeating units. It also transfers sulfate to a unique non-reducing terminal sequence, GalNAc(4SO4)-GlcA(2SO4)-GalNAc(6SO4), to yield a highly sulfated structure similar to the structure found in thrombomodulin chondroitin sulfate. May also act as a B-cell receptor involved in BCR ligation-mediated early activation that mediate regulatory signals key to B-cell development and/or regulation of B-cell-specific RAG expression; however such results are unclear in vivo. The sequence is that of Carbohydrate sulfotransferase 15 (CHST15) from Homo sapiens (Human).